The sequence spans 78 residues: Major outer membrane lipoprotein Lpp (78 aa).

Residues 1–20 form the signal peptide; the sequence is MNRTKLVLGAVILGSTLLAG. C21 carries the N-palmitoyl cysteine lipid modification. A lipid anchor (S-diacylglycerol cysteine) is attached at C21. The stretch at 22–75 forms a coiled coil; the sequence is SSNAKIDQLSTDVQTLNAKVDQLSNDVTAIRSDVQAAKDDAARANQRLDNQAHS. 2 repeats span residues 24–34 and 38–48; these read NAKIDQLSTDV and NAKVDQLSNDV. K78 is modified (N6-murein peptidoglycan lysine).

The protein belongs to the Lpp family. Homotrimer.

It localises to the cell outer membrane. It is found in the secreted. Its subcellular location is the cell wall. In terms of biological role, a highly abundant outer membrane lipoprotein that controls the distance between the inner and outer membranes. The only protein known to be covalently linked to the peptidoglycan network (PGN). Also non-covalently binds the PGN. The link between the cell outer membrane and PGN contributes to maintenance of the structural and functional integrity of the cell envelope, and maintains the correct distance between the PGN and the outer membrane. The chain is Major outer membrane lipoprotein Lpp from Erwinia amylovora (Fire blight bacteria).